The sequence spans 478 residues: 3-isopropylmalate dehydratase large subunit (478 aa).

Residues Cys347, Cys407, and Cys410 each contribute to the [4Fe-4S] cluster site.

It belongs to the aconitase/IPM isomerase family. LeuC type 1 subfamily. In terms of assembly, heterodimer of LeuC and LeuD. [4Fe-4S] cluster serves as cofactor.

The catalysed reaction is (2R,3S)-3-isopropylmalate = (2S)-2-isopropylmalate. The protein operates within amino-acid biosynthesis; L-leucine biosynthesis; L-leucine from 3-methyl-2-oxobutanoate: step 2/4. Catalyzes the isomerization between 2-isopropylmalate and 3-isopropylmalate, via the formation of 2-isopropylmaleate. The protein is 3-isopropylmalate dehydratase large subunit of Prochlorococcus marinus (strain MIT 9313).